We begin with the raw amino-acid sequence, 440 residues long: Lysine histidine transporter-like 6 (440 aa).

The span at 1 to 10 shows a compositional bias: polar residues; it reads MVSSSPVSPS. The tract at residues 1 to 25 is disordered; the sequence is MVSSSPVSPSKETDRKSGEKWTAED. At 1–31 the chain is on the cytoplasmic side; that stretch reads MVSSSPVSPSKETDRKSGEKWTAEDPSRPAK. Residues 11–25 show a composition bias toward basic and acidic residues; sequence KETDRKSGEKWTAED. A helical transmembrane segment spans residues 32 to 51; sequence WWYSTFHTVTAMIGAGVLSL. Residues 52–61 are Extracellular-facing; that stretch reads PYAMAYLGWG. A helical transmembrane segment spans residues 62–82; that stretch reads PGTFVLAMTWGLTLNTMWQMV. Residues 83–109 lie on the Cytoplasmic side of the membrane; it reads QLHECVPGTRFDRYIDLGRYAFGPKLG. A helical membrane pass occupies residues 110–130; it reads PWIVLPQQLIVQVGCNIVYMV. The Extracellular segment spans residues 131–152; sequence TGGKCLKQFVEITCSTCTPVRQ. The helical transmembrane segment at 153–173 threads the bilayer; sequence SYWILGFGGVHFILSQLPNFN. A topological domain (cytoplasmic) is located at residue Ser-174. A helical transmembrane segment spans residues 175–195; the sequence is VAGVSLAAAVMSLCYSTIAWG. The Extracellular portion of the chain corresponds to 196-221; the sequence is GSIAHGRVPDVSYDYKATNPGDFTFR. Residues 222-242 form a helical membrane-spanning segment; that stretch reads VFNALGQISFAFAGHAVALEI. Residues 243–261 are Cytoplasmic-facing; sequence QATMPSTPERPSKVPMWQG. The helical transmembrane segment at 262 to 282 threads the bilayer; that stretch reads VIGAYVVNAVCYFPVALICYW. Topologically, residues 283-300 are extracellular; the sequence is AFGQDVDDNVLMNLQRPA. A helical membrane pass occupies residues 301–321; it reads WLIAAANLMVVVHVIGSYQVF. At 322 to 353 the chain is on the cytoplasmic side; sequence AMPVFDLLERMMVNKFGFKHGVVLRFFTRTIY. The next 2 membrane-spanning stretches (helical) occupy residues 354-374 and 375-395; these read VAFT…LGFF and GGFG…LIIK. The Cytoplasmic segment spans residues 396–399; that stretch reads KPRR. Residues 400 to 420 traverse the membrane as a helical segment; it reads FSVTWFVNWISIIVGVFIMLA. Residues 421-440 are Extracellular-facing; sequence STIGGLRNIIADSSTYSFYA.

Belongs to the amino acid/polyamine transporter 2 family. Amino acid/auxin permease (AAAP) (TC 2.A.18.2) subfamily.

It is found in the cell membrane. Amino acid transporter. This is Lysine histidine transporter-like 6 from Arabidopsis thaliana (Mouse-ear cress).